Here is a 333-residue protein sequence, read N- to C-terminus: Foldase protein PrsA (333 aa).

A signal peptide spans 1–22 (MKKSTKLLAGIVTLASAMTLAA). Cysteine 23 carries the N-palmitoyl cysteine lipid modification. Residue cysteine 23 is the site of S-diacylglycerol cysteine attachment. The 96-residue stretch at 145-240 (TPEMTTQVIT…NKFYIVKVTK (96 aa)) folds into the PpiC domain. A disordered region spans residues 301 to 333 (DKKASKANTSKSDQKTSSDSSKDSQSSKSKSEK). The span at 312–322 (SDQKTSSDSSK) shows a compositional bias: basic and acidic residues. Low complexity predominate over residues 323–333 (DSQSSKSKSEK).

Belongs to the PrsA family.

Its subcellular location is the cell membrane. The enzyme catalyses [protein]-peptidylproline (omega=180) = [protein]-peptidylproline (omega=0). Functionally, plays a major role in protein secretion by helping the post-translocational extracellular folding of several secreted proteins. The protein is Foldase protein PrsA of Streptococcus equi subsp. zooepidemicus (strain H70).